A 150-amino-acid chain; its full sequence is Natriuretic peptides A (150 aa).

The first 24 residues, 1–24, serve as a signal peptide directing secretion; it reads MSSFTITVSFLLVLVFQFPGQTRA. Propeptides lie at residues 25–122 and 92–102; these read NPVY…AAPR and DGGALGRGPWD. A disordered region spans residues 77 to 100; the sequence is LEVPPWTGEVNPAQRDGGALGRGP. Ser-128 is subject to Phosphoserine. Cysteines 129 and 145 form a disulfide.

The protein belongs to the natriuretic peptide family. As to quaternary structure, homodimer; disulfide-linked antiparallel dimer. Post-translationally, the precursor molecule is proteolytically cleaved by CORIN at Arg-122 to produce the atrial natriuretic peptide. Undergoes further proteolytic cleavage by unknown proteases to give rise to long-acting natriuretic peptide, vessel dilator and kaliuretic peptide. Additional processing gives rise to the auriculin and atriopeptin peptides. In the kidneys, alternative processing by an unknown protease results in the peptide urodilatin. In terms of processing, cleavage by MME initiates degradation of the factor and thereby regulates its activity. Degradation by IDE results in reduced activation of NPR1 (in vitro). During IDE degradation, the resulting products can temporarily stimulate NPR2 to produce cGMP, before the fragments are completely degraded and inactivated by IDE (in vitro). Degraded by IDE. Post-translationally, phosphorylation on Ser-128 decreases vasorelaxant activity. As to expression, brain (at protein level).

The protein localises to the secreted. It localises to the perikaryon. Its subcellular location is the cell projection. Hormone that plays a key role in mediating cardio-renal homeostasis, and is involved in vascular remodeling and regulating energy metabolism. Acts by specifically binding and stimulating NPR1 to produce cGMP, which in turn activates effector proteins, such as PRKG1, that drive various biological responses. Regulates vasodilation, natriuresis, diuresis and aldosterone synthesis and is therefore essential for regulating blood pressure, controlling the extracellular fluid volume and maintaining the fluid-electrolyte balance. Also involved in inhibiting cardiac remodeling and cardiac hypertrophy by inducing cardiomyocyte apoptosis and attenuating the growth of cardiomyocytes and fibroblasts. Plays a role in female pregnancy by promoting trophoblast invasion and spiral artery remodeling in uterus, and thus prevents pregnancy-induced hypertension. In adipose tissue, acts in various cGMP- and PKG-dependent pathways to regulate lipid metabolism and energy homeostasis. This includes up-regulating lipid metabolism and mitochondrial oxygen utilization by activating the AMP-activated protein kinase (AMPK), and increasing energy expenditure by acting via MAPK11 to promote the UCP1-dependent thermogenesis of brown adipose tissue. Binds the clearance receptor NPR3 which removes the hormone from circulation. In terms of biological role, may have a role in cardio-renal homeostasis through regulation of natriuresis, diuresis, vasodilation, and inhibiting aldosterone synthesis. In vitro, promotes the production of cGMP and induces vasodilation. May promote natriuresis, at least in part, by enhancing prostaglandin E2 synthesis resulting in the inhibition of renal Na+-K+-ATPase. However reports on the involvement of this peptide in mammal blood volume and blood pressure homeostasis are conflicting; according to a report, in vivo it is not sufficient to activate cGMP and does not inhibit collecting duct transport nor effect diuresis and natriuresis. Appears to bind to specific receptors that are distinct from the receptors bound by atrial natriuretic peptide and vessel dilator. Possibly enhances protein excretion in urine by decreasing proximal tubular protein reabsorption. Functionally, may have a role in cardio-renal homeostasis through regulation of natriuresis, diuresis, and vasodilation. In vitro, promotes the production of cGMP and induces vasodilation. May promote natriuresis, at least in part, by enhancing prostaglandin E2 synthesis resulting in the inhibition of renal Na+-K+-ATPase. However reports on the involvement of this peptide in mammal blood volume and blood pressure homeostasis are conflicting; according to a report it is not sufficient to activate cGMP and does not inhibit collecting duct transport nor effect diuresis and natriuresis. Appears to bind to specific receptors that are distinct from the receptors bound by the atrial natriuretic and long-acting natriuretic peptides. Possibly functions in protein excretion in urine by maintaining the integrity of the proximal tubules and enhancing protein excretion by decreasing proximal tubular protein reabsorption. Its function is as follows. May have a role in cardio-renal homeostasis through regulation of diuresis and inhibiting aldosterone synthesis. In vitro, promotes the production of cGMP and induces vasodilation. May promote natriuresis, at least in part, by enhancing prostaglandin E2 synthesis resulting in the inhibition of renal Na+-K+-ATPase. May have a role in potassium excretion but not sodium excretion (natriuresis). Possibly enhances protein excretion in urine by decreasing proximal tubular protein reabsorption. Hormone produced in the kidneys that appears to be important for maintaining cardio-renal homeostasis. Mediates vasodilation, natriuresis and diuresis primarily in the renal system, in order to maintain the extracellular fluid volume and control the fluid-electrolyte balance. Specifically binds and stimulates cGMP production by renal transmembrane receptors, likely NPR1. Urodilatin not ANP, may be the natriuretic peptide responsible for the regulation of sodium and water homeostasis in the kidney. In terms of biological role, may have a role in cardio-renal homeostasis through regulation of natriuresis and vasodilation. In vivo promotes natriuresis and in vitro, vasodilates renal artery strips. Functionally, may have a role in cardio-renal homeostasis through regulation of regulation of natriuresis and vasodilation. In vivo promotes natriuresis. In vitro, vasodilates intestinal smooth muscle but not smooth muscle strips. Its function is as follows. May have a role in cardio-renal homeostasis through regulation of natriuresis and vasodilation. In vivo promotes natriuresis. In vitro, selectively vasodilates intestinal and vascular smooth muscle strips. May have a role in cardio-renal homeostasis through regulation of natriuresis and vasodilation. In vivo promotes natriuresis. In vitro, selectively vasodilates intestinal smooth muscle but not vascular smooth muscle strips. This Sus scrofa (Pig) protein is Natriuretic peptides A (NPPA).